The primary structure comprises 292 residues: 1D-myo-inositol 2-acetamido-2-deoxy-alpha-D-glucopyranoside deacetylase (292 aa).

Positions 12, 15, and 147 each coordinate Zn(2+).

It belongs to the MshB deacetylase family. Requires Zn(2+) as cofactor.

The catalysed reaction is 1D-myo-inositol 2-acetamido-2-deoxy-alpha-D-glucopyranoside + H2O = 1D-myo-inositol 2-amino-2-deoxy-alpha-D-glucopyranoside + acetate. Catalyzes the deacetylation of 1D-myo-inositol 2-acetamido-2-deoxy-alpha-D-glucopyranoside (GlcNAc-Ins) in the mycothiol biosynthesis pathway. The chain is 1D-myo-inositol 2-acetamido-2-deoxy-alpha-D-glucopyranoside deacetylase from Rhodococcus jostii (strain RHA1).